Consider the following 264-residue polypeptide: Fructose-1,6-bisphosphatase/inositol-1-monophosphatase (264 aa).

Residues glutamate 70, aspartate 86, leucine 88, and aspartate 89 each coordinate Mg(2+). Substrate-binding positions include 89-91, arginine 185, and alanine 190; that span reads DGT. Aspartate 214 contributes to the Mg(2+) binding site.

It belongs to the inositol monophosphatase superfamily. FBPase class 4 family. Mg(2+) serves as cofactor.

The catalysed reaction is beta-D-fructose 1,6-bisphosphate + H2O = beta-D-fructose 6-phosphate + phosphate. It catalyses the reaction a myo-inositol phosphate + H2O = myo-inositol + phosphate. Its function is as follows. Phosphatase with broad specificity; it can dephosphorylate fructose 1,6-bisphosphate, and both D and L isomers of inositol-1-phosphate (I-1-P). This chain is Fructose-1,6-bisphosphatase/inositol-1-monophosphatase (suhB), found in Aquifex aeolicus (strain VF5).